A 106-amino-acid polypeptide reads, in one-letter code: MSLASRRKVRIRLYGTNPADVEQVAREIVDLAKKMGVQVRGPIPLPTRRLIVTVRRAPSGQGYHTFDHWEMRISKRLIDIEASERVLRRLMTIRVPDTVKIELQLI.

Belongs to the universal ribosomal protein uS10 family. In terms of assembly, part of the 30S ribosomal subunit.

Its function is as follows. Involved in the binding of tRNA to the ribosomes. The sequence is that of Small ribosomal subunit protein uS10 from Pyrobaculum aerophilum (strain ATCC 51768 / DSM 7523 / JCM 9630 / CIP 104966 / NBRC 100827 / IM2).